The sequence spans 429 residues: Acetylornithine aminotransferase (429 aa).

Residues G126–A127 and F160 contribute to the pyridoxal 5'-phosphate site. N(2)-acetyl-L-ornithine is bound at residue R163. Residue D251–Q254 participates in pyridoxal 5'-phosphate binding. Residue K280 is modified to N6-(pyridoxal phosphate)lysine. S307 serves as a coordination point for N(2)-acetyl-L-ornithine. Residue T308 coordinates pyridoxal 5'-phosphate.

The protein belongs to the class-III pyridoxal-phosphate-dependent aminotransferase family. ArgD subfamily. As to quaternary structure, homodimer. Requires pyridoxal 5'-phosphate as cofactor.

It localises to the cytoplasm. The catalysed reaction is N(2)-acetyl-L-ornithine + 2-oxoglutarate = N-acetyl-L-glutamate 5-semialdehyde + L-glutamate. Its pathway is amino-acid biosynthesis; L-arginine biosynthesis; N(2)-acetyl-L-ornithine from L-glutamate: step 4/4. N-acetylornithine aminotransferase activity is stimulated by the addition of Mg(2+), Ca(2+) or Mn(2+), and inhibited by the addition of Zn(2+), Cu(2+), Co(2+) or Ni(2+). Functionally, catalyzes the reversible conversion of N-acetylornithine to N-acetylglutamate-5-semialdehyde. In vitro, also shows very low ornithine aminotransferase (OAT) and gamma-aminobutyrate aminotransferase (GABA-AT) activity, catalyzing the conversion of ornithine (Orn) to glutamate-5-semialdehyde and of gamma-aminobutyric acid (GABA) to succinate semialdehyde. It has been shown to function as a GABA-AT and contributes to closing the tricarboxylic acid cycle of Synechocystis sp. PCC6803 via the GABA shunt. However, the catalytic efficiency toward N-acetylornithine is 2500-fold and 10700-fold higher than that toward ornithine and gamma-aminobutyrate, respectively, indicating that the protein mainly functions as an N-acetylornithine aminotransferase. This Synechocystis sp. (strain ATCC 27184 / PCC 6803 / Kazusa) protein is Acetylornithine aminotransferase.